Reading from the N-terminus, the 500-residue chain is Glycerol kinase (500 aa).

T11 serves as a coordination point for ADP. ATP-binding residues include T11, T12, and S13. T11 provides a ligand contact to sn-glycerol 3-phosphate. R15 is a binding site for ADP. Sn-glycerol 3-phosphate contacts are provided by R81, E82, Y133, and D242. Glycerol is bound by residues R81, E82, Y133, D242, and Q243. ADP is bound by residues T264 and G307. Residues T264, G307, Q311, and G411 each coordinate ATP. G411 is an ADP binding site.

The protein belongs to the FGGY kinase family.

It carries out the reaction glycerol + ATP = sn-glycerol 3-phosphate + ADP + H(+). The protein operates within polyol metabolism; glycerol degradation via glycerol kinase pathway; sn-glycerol 3-phosphate from glycerol: step 1/1. Inhibited by fructose 1,6-bisphosphate (FBP). Its function is as follows. Key enzyme in the regulation of glycerol uptake and metabolism. Catalyzes the phosphorylation of glycerol to yield sn-glycerol 3-phosphate. The protein is Glycerol kinase of Bradyrhizobium sp. (strain BTAi1 / ATCC BAA-1182).